The primary structure comprises 1939 residues: Myosin-1 (1939 aa).

The 50-residue stretch at Asp33 to Pro82 folds into the Myosin N-terminal SH3-like domain. Thr64 and Thr69 each carry phosphothreonine. One can recognise a Myosin motor domain in the interval Asp86–Asp782. An N6,N6,N6-trimethyllysine modification is found at Lys130. Gly179 to Thr186 serves as a coordination point for ATP. The residue at position 389 (Tyr389) is a Phosphotyrosine. Thr419 carries the post-translational modification Phosphothreonine. Residue Tyr424 is modified to Phosphotyrosine. Residues Leu659–Glu681 are actin-binding. Pros-methylhistidine is present on His757. Positions Lys761 to Gly775 are actin-binding. The IQ domain maps to Leu785–Ser814. Positions Leu843–Glu1939 form a coiled coil. Phosphoserine is present on residues Ser1092, Ser1096, Ser1162, and Ser1237. Thr1241 is subject to Phosphothreonine. Phosphoserine is present on residues Ser1243 and Ser1261. Residues Thr1265 and Thr1286 each carry the phosphothreonine modification. Residues Ser1288, Ser1292, Ser1303, and Ser1306 each carry the phosphoserine modification. Residue Thr1467 is modified to Phosphothreonine. Ser1474 carries the post-translational modification Phosphoserine. At Tyr1492 the chain carries Phosphotyrosine. At Ser1495 the chain carries Phosphoserine. Thr1501 bears the Phosphothreonine mark. The residue at position 1514 (Ser1514) is a Phosphoserine. Residue Thr1517 is modified to Phosphothreonine. Ser1542, Ser1554, Ser1574, Ser1600, Ser1603, Ser1714, and Ser1726 each carry phosphoserine. Thr1730 and Thr1736 each carry phosphothreonine. At Ser1739 the chain carries Phosphoserine.

This sequence belongs to the TRAFAC class myosin-kinesin ATPase superfamily. Myosin family. In terms of assembly, muscle myosin is a hexameric protein that consists of 2 heavy chain subunits (MHC), 2 alkali light chain subunits (MLC) and 2 regulatory light chain subunits (MLC-2). Interacts with SLC26A5.

The protein resides in the cytoplasm. It is found in the myofibril. Functionally, required for normal hearing. It plays a role in cochlear amplification of auditory stimuli, likely through the positive regulation of prestin (SLC26A5) activity and outer hair cell (OHC) electromotility. The polypeptide is Myosin-1 (Homo sapiens (Human)).